Reading from the N-terminus, the 587-residue chain is Chaperonin GroEL 1 (587 aa).

ATP is bound by residues 29-32 (TIGP), 86-90 (DGTTT), Gly413, and Asp492.

This sequence belongs to the chaperonin (HSP60) family. Forms a cylinder of 14 subunits composed of two heptameric rings stacked back-to-back. Interacts with the co-chaperonin GroES.

It localises to the cytoplasm. The enzyme catalyses ATP + H2O + a folded polypeptide = ADP + phosphate + an unfolded polypeptide.. Together with its co-chaperonin GroES, plays an essential role in assisting protein folding. The GroEL-GroES system forms a nano-cage that allows encapsulation of the non-native substrate proteins and provides a physical environment optimized to promote and accelerate protein folding. The protein is Chaperonin GroEL 1 of Prochlorococcus marinus (strain MIT 9515).